The following is a 906-amino-acid chain: Protein translocase subunit SecA (906 aa).

ATP-binding positions include Q89, 107–111 (GEGKT), and D502. Residues C885, C887, C896, and H897 each contribute to the Zn(2+) site.

The protein belongs to the SecA family. In terms of assembly, monomer and homodimer. Part of the essential Sec protein translocation apparatus which comprises SecA, SecYEG and auxiliary proteins SecDF-YajC and YidC. Zn(2+) is required as a cofactor.

The protein resides in the cell inner membrane. The protein localises to the cytoplasm. The enzyme catalyses ATP + H2O + cellular proteinSide 1 = ADP + phosphate + cellular proteinSide 2.. In terms of biological role, part of the Sec protein translocase complex. Interacts with the SecYEG preprotein conducting channel. Has a central role in coupling the hydrolysis of ATP to the transfer of proteins into and across the cell membrane, serving both as a receptor for the preprotein-SecB complex and as an ATP-driven molecular motor driving the stepwise translocation of polypeptide chains across the membrane. The chain is Protein translocase subunit SecA from Rhizobium rhizogenes (strain K84 / ATCC BAA-868) (Agrobacterium radiobacter).